A 158-amino-acid polypeptide reads, in one-letter code: MQPKIRVRGQYIKDLSFENPNAPKVFLMMSKTPPEINISVNVSSAALPVKPPEGEQASVALYEVALQINIESVVEKLPAFICEIKYCGVFSIEEDEELEQEQVKRALLINAPSILFPFVREVIAKVTSSAGFPPLMLEVIDFSAMYEKQLAENADGEK.

The protein belongs to the SecB family. As to quaternary structure, homotetramer, a dimer of dimers. One homotetramer interacts with 1 SecA dimer.

The protein resides in the cytoplasm. Its function is as follows. One of the proteins required for the normal export of preproteins out of the cell cytoplasm. It is a molecular chaperone that binds to a subset of precursor proteins, maintaining them in a translocation-competent state. It also specifically binds to its receptor SecA. The sequence is that of Protein-export protein SecB from Anaplasma phagocytophilum (strain HZ).